Reading from the N-terminus, the 127-residue chain is Small ribosomal subunit protein uS13 (127 aa).

Positions 97-127 (PVRGQRTRTNARTRRGRRVTVAGKKKAPSKK) are disordered. Basic residues predominate over residues 101-127 (QRTRTNARTRRGRRVTVAGKKKAPSKK).

The protein belongs to the universal ribosomal protein uS13 family. Part of the 30S ribosomal subunit. Forms a loose heterodimer with protein S19. Forms two bridges to the 50S subunit in the 70S ribosome.

Functionally, located at the top of the head of the 30S subunit, it contacts several helices of the 16S rRNA. In the 70S ribosome it contacts the 23S rRNA (bridge B1a) and protein L5 of the 50S subunit (bridge B1b), connecting the 2 subunits; these bridges are implicated in subunit movement. Contacts the tRNAs in the A and P-sites. This Microcystis aeruginosa (strain NIES-843 / IAM M-2473) protein is Small ribosomal subunit protein uS13.